The chain runs to 318 residues: Olfactory receptor 56A1 (318 aa).

Topologically, residues 1–32 are extracellular; the sequence is MIQPMASPSNSSTVPVSEFLLICFPNFQSWQH. An N-linked (GlcNAc...) asparagine glycan is attached at asparagine 10. A helical membrane pass occupies residues 33-53; that stretch reads WLSLPLSLLFLLAMGANTTLL. Residues 54–61 are Cytoplasmic-facing; that stretch reads ITIQLEAS. Residues 62–82 traverse the membrane as a helical segment; that stretch reads LHQPLYYLLSLLSLLDIVLCL. The Extracellular portion of the chain corresponds to 83 to 106; sequence TVIPKVLAIFWYDLRSISFPACFL. Cysteine 104 and cysteine 196 form a disulfide bridge. Residues 107 to 127 form a helical membrane-spanning segment; it reads QMFIMNSFLPMESCTFMVMAY. Residues 128–146 lie on the Cytoplasmic side of the membrane; it reads DRYVAICHPLRYPSIITNQ. Residues 147–167 form a helical membrane-spanning segment; sequence FVAKASVFIVVRNALLTAPIP. Topologically, residues 168–203 are extracellular; that stretch reads ILTSLLHYCGENVIENCICANLSVSRLSCDNFTLNR. Asparagine 188 and asparagine 198 each carry an N-linked (GlcNAc...) asparagine glycan. Residues 204–224 form a helical membrane-spanning segment; the sequence is IYQFVAGWTLLGSDLFLIFLS. Residues 225-244 are Cytoplasmic-facing; that stretch reads YTFILRAVLRFKAEGAAVKA. A helical membrane pass occupies residues 245 to 265; sequence LSTCGSHFILILFFSTILLVV. Over 266 to 280 the chain is Extracellular; sequence VLTNVARKKVPMDIL. Residues 281 to 301 traverse the membrane as a helical segment; it reads ILLNVLHHLIPPALNPIVYGV. Over 302–318 the chain is Cytoplasmic; the sequence is RTKEIKQGIQKLLQRGR.

The protein belongs to the G-protein coupled receptor 1 family.

It is found in the cell membrane. Its function is as follows. Odorant receptor. The polypeptide is Olfactory receptor 56A1 (OR56A1) (Homo sapiens (Human)).